Here is a 188-residue protein sequence, read N- to C-terminus: Inosine triphosphate pyrophosphatase (188 aa).

12 to 17 contacts ITP; that stretch reads TGNANK. Glu-40 lines the Mg(2+) pocket. Residues Lys-52, 68 to 69, Lys-85, 144 to 147, Lys-165, and 170 to 171 each bind ITP; these read DT, FGWD, and HR.

This sequence belongs to the HAM1 NTPase family. As to quaternary structure, homodimer. It depends on Mg(2+) as a cofactor. Requires Mn(2+) as cofactor.

Its subcellular location is the cytoplasm. The protein localises to the nucleus. It carries out the reaction ITP + H2O = IMP + diphosphate + H(+). It catalyses the reaction dITP + H2O = dIMP + diphosphate + H(+). The catalysed reaction is XTP + H2O = XMP + diphosphate + H(+). Its function is as follows. Pyrophosphatase that hydrolyzes non-canonical purine nucleotides such as inosine triphosphate (ITP), deoxyinosine triphosphate (dITP) or xanthosine 5'-triphosphate (XTP) to their respective monophosphate derivatives. The enzyme does not distinguish between the deoxy- and ribose forms. Probably excludes non-canonical purines from RNA and DNA precursor pools, thus preventing their incorporation into RNA and DNA and avoiding chromosomal lesions. The sequence is that of Inosine triphosphate pyrophosphatase from Podospora anserina (strain S / ATCC MYA-4624 / DSM 980 / FGSC 10383) (Pleurage anserina).